The primary structure comprises 277 residues: Shikimate dehydrogenase (NADP(+)) (277 aa).

Shikimate contacts are provided by residues 15 to 17 (SLS) and threonine 62. Catalysis depends on lysine 66, which acts as the Proton acceptor. Residues asparagine 87 and aspartate 102 each contribute to the shikimate site. NADP(+) is bound by residues 127-131 (GAGGA), 151-156 (NRTVDK), and isoleucine 219. Residue tyrosine 221 participates in shikimate binding. Glycine 242 serves as a coordination point for NADP(+).

It belongs to the shikimate dehydrogenase family. Homodimer.

It catalyses the reaction shikimate + NADP(+) = 3-dehydroshikimate + NADPH + H(+). The protein operates within metabolic intermediate biosynthesis; chorismate biosynthesis; chorismate from D-erythrose 4-phosphate and phosphoenolpyruvate: step 4/7. Its function is as follows. Involved in the biosynthesis of the chorismate, which leads to the biosynthesis of aromatic amino acids. Catalyzes the reversible NADPH linked reduction of 3-dehydroshikimate (DHSA) to yield shikimate (SA). This chain is Shikimate dehydrogenase (NADP(+)), found in Bacillus cereus (strain ATCC 10987 / NRS 248).